The sequence spans 532 residues: SET and MYND domain-containing protein DDB_G0288495 (532 aa).

In terms of domain architecture, SET spans Pro-25 to Ile-448. The MYND-type; degenerate zinc-finger motif lies at Cys-70 to Cys-116. The stretch at Ile-199–Lys-240 forms a coiled coil. Positions Asn-204–Asn-234 are disordered. Residues Phe-207–Gln-217 are compositionally biased toward acidic residues.

The protein belongs to the class V-like SAM-binding methyltransferase superfamily.

Its function is as follows. Probable methyltransferase. The chain is SET and MYND domain-containing protein DDB_G0288495 from Dictyostelium discoideum (Social amoeba).